Reading from the N-terminus, the 945-residue chain is MSNKKADSKPQAKYPVNLLDTPFPMRGDLPKREPQWVKEWEERGIYEKIRAASKGRPKFILHDGPPYANGDIHLGHAVNKILKDIVVKSRNMAGFDAPYVPGWDCHGMPIEIQIEKQFGKSLPAAEVMSKARAYATEQIEKQKVGFKRLGVLGDWANPYKTMNFVNEAEEIRALGKIIEKGYVYRGLKPVNWCFDCGSALAEAEVEYKDRTDPTIDVMFAFAEPEKTAQAFGLPALPRAEGGIVIWTTTPWTIPANQALNLHPEIVYALVDTERGLLIIAEERVAACMADFKLTGRVVATAPGVKLANLRFHHPLASAHPGYKRTAPVYLGDYVTTDTGTGVVHSSPAYGIEDFMSCKAHGMTDSDFINPVMGDGRYIESLPLFGGLSIWDANPKIVDALNVAGSLLRSEKYTHSYMHCWRHKTPIIYRATSQWFAGMDVTPRDDGRTLREAALEGVEATAFYPSWGKQRLFSMIANRPDWTLSRQRQWGVPMAFFVHKETGELHPRTLELLEEVAKRVEQSGIEAWQSLDPRELIGDDANMYEKNRDTLDVWFDSGTTHWHVLRGSHKDQLQFPADLYLEGSDQHRGWFHSSLLTASMIDGRAPYKGLLTHGFTVDGEGRKMSKSLGNGVDPHEVANRLGAEIIRLWIASTDYSGELAISEEILKRVTEGYRRIRNTLRFLLANLSDFDFAQHAVPVDEWLEIDRYAVAFSAQLQTELLGHYEKYEFHPVVAKLQTYCSEDLGGFYLDVLKDRLYTSAADSRARRSAQTALYHLTHGLLRVLAPFLSFTAEEAWKVFQPASDTVFTETYYAYPEVAGSAALIDKWALLRDVRGNVTKALEEARTANRIGSSLQAEVAVHASGARYDALTSLGDDLKFVLITSAATVVKVDDEAQESVDVAASKYQKCERCWHYREDVGAHADHPTLCGRCFSNLFENGEIRSAA.

Positions 66–76 (PYANGDIHLGH) match the 'HIGH' region motif. E581 contributes to the L-isoleucyl-5'-AMP binding site. The short motif at 622–626 (KMSKS) is the 'KMSKS' region element. Residue K625 coordinates ATP. Residues C908, C911, C928, and C931 each contribute to the Zn(2+) site.

This sequence belongs to the class-I aminoacyl-tRNA synthetase family. IleS type 1 subfamily. As to quaternary structure, monomer. Zn(2+) serves as cofactor.

Its subcellular location is the cytoplasm. The enzyme catalyses tRNA(Ile) + L-isoleucine + ATP = L-isoleucyl-tRNA(Ile) + AMP + diphosphate. Catalyzes the attachment of isoleucine to tRNA(Ile). As IleRS can inadvertently accommodate and process structurally similar amino acids such as valine, to avoid such errors it has two additional distinct tRNA(Ile)-dependent editing activities. One activity is designated as 'pretransfer' editing and involves the hydrolysis of activated Val-AMP. The other activity is designated 'posttransfer' editing and involves deacylation of mischarged Val-tRNA(Ile). The protein is Isoleucine--tRNA ligase of Burkholderia ambifaria (strain MC40-6).